Here is a 443-residue protein sequence, read N- to C-terminus: Protein SCAR (443 aa).

The interaction with brk1 and abiA stretch occupies residues 1 to 96; that stretch reads MVLITRYLPS…DYHRNTSIDT (96 aa). Positions 166–201 form a coiled coil; the sequence is VAEQQKLHEEARQRKRERREARLKKKGEKNEVEVKK. Disordered regions lie at residues 176–197 and 220–386; these read ARQR…KNEV and INIE…RSDL. The span at 178-192 shows a compositional bias: basic residues; the sequence is QRKRERREARLKKKG. Residues 221-252 show a composition bias toward polar residues; that stretch reads NIESPHTSSPQIQHQSNNTATPQHTTQHFGTN. 2 stretches are compositionally biased toward low complexity: residues 263–277 and 285–305; these read SQSS…INSY and NTST…TGFN. Positions 306 to 323 are enriched in pro residues; the sequence is TPPPPMSNNNNMPPPPPM. Positions 324-338 are enriched in polar residues; it reads QQNGGAANNRLSVHN. Over residues 346-365 the composition is skewed to pro residues; sequence PAPPPPPPPPSAPAPPPPPM. One can recognise a WH2 domain in the interval 382–399; the sequence is ARSDLLSSIMQGMALKPA.

Belongs to the SCAR/WAVE family. Part of a Scar/WAVE complex containing brk1, scrA, abiA, pirA and napA. Interacts with brk1 and abiA.

The protein resides in the cytoplasm. Its subcellular location is the cytoskeleton. It is found in the cell projection. It localises to the pseudopodium tip. The protein localises to the filopodium tip. Involved in regulation of actin and microtubule organization. Regulates phagocytosis and macropinocytosis. The sequence is that of Protein SCAR (scrA) from Dictyostelium discoideum (Social amoeba).